Here is a 161-residue protein sequence, read N- to C-terminus: FAD synthase (161 aa).

ATP-binding positions include 19–20 (TF), 24–27 (HPGH), aspartate 106, and tyrosine 133.

Belongs to the archaeal FAD synthase family. Homodimer. A divalent metal cation is required as a cofactor.

The catalysed reaction is FMN + ATP + H(+) = FAD + diphosphate. It participates in cofactor biosynthesis; FAD biosynthesis; FAD from FMN: step 1/1. Catalyzes the transfer of the AMP portion of ATP to flavin mononucleotide (FMN) to produce flavin adenine dinucleotide (FAD) coenzyme. The chain is FAD synthase from Methanothermobacter marburgensis (strain ATCC BAA-927 / DSM 2133 / JCM 14651 / NBRC 100331 / OCM 82 / Marburg) (Methanobacterium thermoautotrophicum).